The following is a 197-amino-acid chain: Transmembrane protein 126A (197 aa).

Over 1-35 (MENHEPDGTIIKENLTDIIARKINQLPEAERNLLE) the chain is Mitochondrial matrix. The chain crosses the membrane as a helical span at residues 36 to 56 (NGSTYVGLNAALCGLIANSLF). The Mitochondrial intermembrane segment spans residues 57–58 (RR). Residues 59 to 79 (ILHVTQARIAAGLPMAVIPFL) traverse the membrane as a helical segment. Residues 80 to 107 (TANVSYKGFVSLPLNTGDLQCETCTVTR) lie on the Mitochondrial matrix side of the membrane. Residues 108-128 (GGLVGLVFGGLYPVFLAIPVN) form a helical membrane-spanning segment. The Mitochondrial intermembrane portion of the chain corresponds to 129 to 160 (GGLAARYNSALLPEKGNILNYWIRISKPVFRK). The chain crosses the membrane as a helical span at residues 161–177 (MLFPILLQTGFAAYLGS). Residues 178–197 (RQYKLLIKALQLPEPGLEIE) lie on the Mitochondrial matrix side of the membrane.

Belongs to the TMEM126 family. As to quaternary structure, interacts with OXA1L; promoting cotranslational quality control in mitochondria.

It localises to the mitochondrion inner membrane. Protein required for the cotranslational protein quality control in the inner membrane of the mitochondria. Associates with newly synthesized polypeptides and may act as a chaperone that cooperates with OXA1L for the insertion of newly synthesized mitochondrial proteins into the inner membrane. Required for the assembly of the ND4 module of mitochondrial complex I. The sequence is that of Transmembrane protein 126A (TMEM126A) from Bos taurus (Bovine).